Here is a 225-residue protein sequence, read N- to C-terminus: Jeltraxin (225 aa).

An N-terminal signal peptide occupies residues 1–19; it reads MKGLVIFFCLFYGCHVAGA. The Pentraxin (PTX) domain maps to 21–223; the sequence is GKTIMLFPQK…IVVLRNQFIP (203 aa). A disulfide bridge links cysteine 51 with cysteine 112. Ca(2+) contacts are provided by aspartate 75 and asparagine 76. Residue asparagine 87 is glycosylated (N-linked (GlcNAc...) asparagine). Glutamate 153, glutamine 154, aspartate 155, and glutamine 165 together coordinate Ca(2+). Asparagine 207 carries N-linked (GlcNAc...) asparagine glycosylation.

As to quaternary structure, homodecamer consisting of two homopentamer units. Pentraxin (or pentaxin) have a discoid arrangement of 5 non-covalently bound subunits. It depends on Ca(2+) as a cofactor. In terms of processing, glycosylated. As to expression, oviduct. Highest expression levels were detected in the pars convoluta with lower levels detected in the pars recta. No expression was detected in the pars uterina.

The protein localises to the secreted. In terms of biological role, calcium-dependent beta-galactose specific lectin. The polypeptide is Jeltraxin (Lepidobatrachus laevis (Budgett's frog)).